Here is an 88-residue protein sequence, read N- to C-terminus: Conotoxin tx9a (88 aa).

A signal peptide spans 1–27; the sequence is MHLSLARSAVLMLLLLFALGNFVVVQS. A propeptide spanning residues 28–58 is cleaved from the precursor; that stretch reads GQITRDVDNGQLTDNRRNLQSKWKPVSLYMS. Cystine bridges form between Cys62–Cys76, Cys66–Cys78, and Cys72–Cys83. Residues Glu68 and Glu73 each carry the 4-carboxyglutamate; partial modification. At Asn87 the chain carries Asparagine amide.

Exists in 4 different forms, depending on gamma-carboxyglutamations. Tx9a-EE does not contain gamma-carboxyglutamate, tx9a-E/gamma has one gamma-carboxyglutamate at position 73, tx9a-gamma/E has one gamma-carboxyglutamate at position 68, and tx9a-agmma/gamma has two gamma-carboxyglutamates at positions 68 and 73. In terms of tissue distribution, expressed by the venom duct. All different gamma-carboxyalted forms are mostly present in part 2, part 3 and part 4 of the venom duct. They are also found in part 1 (proximal part near the venom bulb) and part 5, but in lower quantity.

It localises to the secreted. Its function is as follows. Neurotoxin. In vivo, intracranial injection into mice of 10 pmol/g of the peptide induces running in circles and hyperactivity. At higher doses (50 pmol/g), the mice exhibit running and climbing symptoms for close to one hour. Between 130 and 150 pmol/g, characteristic 'spasmodic' symptomatology is elicited. A hand clap would make mice jump high and start running rapidly. When exposed to a loud hand clap, or if the cage cover were dropped, the mice lose motor control and exhibit seizure-like symptoms from which they eventually recover. At the highest doses tested (over 250 pmol/g), after the characteristic spasmodic symptomatology, lethality occurs. Injection of a similar dose range intramuscularly into Siamese fighting fish elicited no unusual symptomatology. The chain is Conotoxin tx9a from Conus textile (Cloth-of-gold cone).